The chain runs to 484 residues: ATP synthase subunit beta (484 aa).

169-176 serves as a coordination point for ATP; the sequence is GGAGVGKT.

This sequence belongs to the ATPase alpha/beta chains family. As to quaternary structure, F-type ATPases have 2 components, CF(1) - the catalytic core - and CF(0) - the membrane proton channel. CF(1) has five subunits: alpha(3), beta(3), gamma(1), delta(1), epsilon(1). CF(0) has three main subunits: a(1), b(2) and c(9-12). The alpha and beta chains form an alternating ring which encloses part of the gamma chain. CF(1) is attached to CF(0) by a central stalk formed by the gamma and epsilon chains, while a peripheral stalk is formed by the delta and b chains.

It is found in the cell membrane. The catalysed reaction is ATP + H2O + 4 H(+)(in) = ADP + phosphate + 5 H(+)(out). Produces ATP from ADP in the presence of a proton gradient across the membrane. The catalytic sites are hosted primarily by the beta subunits. The sequence is that of ATP synthase subunit beta from Nocardioides sp. (strain ATCC BAA-499 / JS614).